A 592-amino-acid polypeptide reads, in one-letter code: MRSHYCGDVNRSHVGEEVTLVGWVNRSRDLGGVVFLDLRDREGVIQVVYDPDLPEVFDVASTLRSEFCVQVKGLVRARPDSQINDQMRTGEIEVLGKALTILNSAPALPINMDKNQHNTEEQRLKYRYLDLRRPEMAERIIFRSKVTSAVRRFLDGNGFLDIETPILTKATPEGARDYLVPSRTYKGQFFALPQSPQLFKQLLMMSGFDRYYQIVKCFRDEDLRADRQPEFTQIDIETSFMTSAQVMDKTEEMVRGLFKELLNVDLGEFPKMTFAEAMRRYGSDKPDLRNPLELVDVADLVKDVDFKVFQEPANDSEGRVAVLCVPGGASLSRKQLDEYGKYVNIYGAKGLAWMKVNELENGLEGIQSPVLKFLSEEVVKGILERTGAANGDLILFGADKANIVAEAMGALRLKVGEDFDLLQGDWKPLWVVDFPMFERTSDGGLHAMHHPFTAPSGITPAELEADPTAAISDAYDMVLNGCELGGGSVRIYDAEMQSAVFRILGINDEEAQEKFGFLLEALKYGTPPHAGLAFGLDRMVMLMTGASSIRDVMAFPKTTTAACPLTNAPGFANPVQLEELGVSVVEAKKEQE.

Glu173 contributes to the L-aspartate binding site. Residues 197–200 (QLFK) form an aspartate region. Arg219 is a binding site for L-aspartate. ATP-binding positions include 219-221 (RDE) and Gln228. His449 is an L-aspartate binding site. Residue Glu483 coordinates ATP. Arg490 is an L-aspartate binding site. 535-538 (GLDR) contacts ATP.

The protein belongs to the class-II aminoacyl-tRNA synthetase family. Type 1 subfamily. Homodimer.

Its subcellular location is the cytoplasm. The catalysed reaction is tRNA(Asp) + L-aspartate + ATP = L-aspartyl-tRNA(Asp) + AMP + diphosphate. Catalyzes the attachment of L-aspartate to tRNA(Asp) in a two-step reaction: L-aspartate is first activated by ATP to form Asp-AMP and then transferred to the acceptor end of tRNA(Asp). This is Aspartate--tRNA ligase from Shewanella loihica (strain ATCC BAA-1088 / PV-4).